The chain runs to 515 residues: 2-isopropylmalate synthase (515 aa).

The Pyruvate carboxyltransferase domain occupies I4 to K266. Positions 13, 201, 203, and 237 each coordinate Mn(2+). The segment at Q391 to Q515 is regulatory domain.

Belongs to the alpha-IPM synthase/homocitrate synthase family. LeuA type 1 subfamily. As to quaternary structure, homodimer. Requires Mn(2+) as cofactor.

It is found in the cytoplasm. It catalyses the reaction 3-methyl-2-oxobutanoate + acetyl-CoA + H2O = (2S)-2-isopropylmalate + CoA + H(+). It participates in amino-acid biosynthesis; L-leucine biosynthesis; L-leucine from 3-methyl-2-oxobutanoate: step 1/4. In terms of biological role, catalyzes the condensation of the acetyl group of acetyl-CoA with 3-methyl-2-oxobutanoate (2-ketoisovalerate) to form 3-carboxy-3-hydroxy-4-methylpentanoate (2-isopropylmalate). The sequence is that of 2-isopropylmalate synthase from Geobacillus sp. (strain WCH70).